Here is a 281-residue protein sequence, read N- to C-terminus: Src-like-adapter (281 aa).

Residues 1–20 form a disordered region; that stretch reads MGNSMKSTSPPSERPLSSSE. G2 carries the N-myristoyl glycine lipid modification. The span at 7–20 shows a compositional bias: low complexity; that stretch reads STSPPSERPLSSSE. In terms of domain architecture, SH3 spans 22–82; sequence LESDFLAVLT…PGICVARVYH (61 aa). An SH2 domain is found at 84-175; the sequence is WLFEGLGRDK…GLCCVLTTPC (92 aa). The SLA C-terminal stretch occupies residues 190–281; the sequence is CTSPGSPVTL…FFSAPQYFED (92 aa). Phosphoserine is present on S258. Y278 carries the post-translational modification Phosphotyrosine.

As to quaternary structure, homodimer. Interacts with phosphorylated CBL, SYK and LAT. Homodimerization and interaction with phosphorylated CBL occurs via its C-terminal domain. Interacts with PDGFRB and EPHA2. Interacts with phosphorylated proteins ZAP70; CD3Z; VAV1 and LCP2 via its SH2 domain. Predominantly expressed in lymphoid tissues. Highly expressed in spleen, thymus and lymph nodes. Weakly expressed in lung and brain. Expressed in T-cells and at low level in B-cells.

It localises to the cytoplasm. Its subcellular location is the endosome. Its function is as follows. Adapter protein, which negatively regulates T-cell receptor (TCR) signaling. Inhibits T-cell antigen-receptor induced activation of nuclear factor of activated T-cells. Involved in the negative regulation of positive selection and mitosis of T-cells. May act by linking signaling proteins such as ZAP70 with CBL, leading to a CBL dependent degradation of signaling proteins. The polypeptide is Src-like-adapter (Sla) (Mus musculus (Mouse)).